A 148-amino-acid polypeptide reads, in one-letter code: Large ribosomal subunit protein uL15 (148 aa).

The interval 18 to 38 is disordered; that stretch reads GYGRVGKHRKHPGGRGNAGGL.

Belongs to the universal ribosomal protein uL15 family.

The chain is Large ribosomal subunit protein uL15 (rpl27a) from Dictyostelium discoideum (Social amoeba).